A 331-amino-acid polypeptide reads, in one-letter code: 6-phosphogluconolactonase (331 aa).

This sequence belongs to the cycloisomerase 2 family.

It carries out the reaction 6-phospho-D-glucono-1,5-lactone + H2O = 6-phospho-D-gluconate + H(+). Its pathway is carbohydrate degradation; pentose phosphate pathway; D-ribulose 5-phosphate from D-glucose 6-phosphate (oxidative stage): step 2/3. Functionally, catalyzes the hydrolysis of 6-phosphogluconolactone to 6-phosphogluconate. This chain is 6-phosphogluconolactonase, found in Salmonella agona (strain SL483).